The sequence spans 383 residues: Serine protease 23 (383 aa).

The N-terminal stretch at 1 to 23 is a signal peptide; that stretch reads MAGIPGLLILLLVLLCVFMQVSP. Residue Asn-93 is glycosylated (N-linked (GlcNAc...) asparagine). Cys-160 and Cys-176 form a disulfide bridge. His-175 serves as the catalytic Charge relay system. Asn-207 is a glycosylation site (N-linked (GlcNAc...) asparagine). Residues Asp-240 and Ser-316 each act as charge relay system in the active site.

It belongs to the peptidase S1 family.

The protein resides in the secreted. This chain is Serine protease 23 (Prss23), found in Rattus norvegicus (Rat).